The chain runs to 437 residues: CMP-5'-(3-aminopropyl)phosphonate hydroxylase (437 aa).

It depends on FAD as a cofactor.

It catalyses the reaction CMP-5'-(3-aminopropyl)phosphonate + NADPH + O2 = CMP-5'-(N-hydroxy-3-aminopropyl)phosphonate + NADP(+) + H2O. It participates in antibiotic biosynthesis. In terms of biological role, hydroxylase involved in the biosynthesis of the phosphonate antibiotic FR-900098, a potent antimalarial agent that acts as an inhibitor of 1-deoxy-D-xylulose 5-phosphate reductoisomerase (DXR), the first enzyme in the nonmevalonate pathway for isoprenoid biosynthesis. Catalyzes the N-hydroxylation of CMP-5'-3-aminopropylphosphonate (CMP-5'-3APn) to CMP-5'-(N-hydroxy-3-aminopropyl)phosphonate (CMP-5'-H3APn). Cannot use CMP-5'-N-acetyl-3-aminopropylphosphonate (CMP-5'-Ac3APn) as a substrate. The sequence is that of CMP-5'-(3-aminopropyl)phosphonate hydroxylase from Streptomyces rubellomurinus (strain ATCC 31215).